The sequence spans 188 residues: Pyridoxal 5'-phosphate synthase subunit PdxT (188 aa).

47–49 (GES) serves as a coordination point for L-glutamine. Cys79 (nucleophile) is an active-site residue. L-glutamine is bound by residues Arg106 and 134–135 (IR). Active-site charge relay system residues include His169 and Glu171.

The protein belongs to the glutaminase PdxT/SNO family. As to quaternary structure, in the presence of PdxS, forms a dodecamer of heterodimers. Only shows activity in the heterodimer.

It catalyses the reaction aldehydo-D-ribose 5-phosphate + D-glyceraldehyde 3-phosphate + L-glutamine = pyridoxal 5'-phosphate + L-glutamate + phosphate + 3 H2O + H(+). The catalysed reaction is L-glutamine + H2O = L-glutamate + NH4(+). It functions in the pathway cofactor biosynthesis; pyridoxal 5'-phosphate biosynthesis. Catalyzes the hydrolysis of glutamine to glutamate and ammonia as part of the biosynthesis of pyridoxal 5'-phosphate. The resulting ammonia molecule is channeled to the active site of PdxS. The chain is Pyridoxal 5'-phosphate synthase subunit PdxT from Caldicellulosiruptor bescii (strain ATCC BAA-1888 / DSM 6725 / KCTC 15123 / Z-1320) (Anaerocellum thermophilum).